The primary structure comprises 262 residues: Oxidoreductase AgnL4 (262 aa).

Belongs to the avfA family.

The protein operates within secondary metabolite biosynthesis. Oxidoreductase; part of the gene cluster that mediates the biosynthesis of agnestins, dihydroxy-xanthone metabolites. The pathway begins with the assembly and cyclization of atrochrysone thioester by the non-reducing polyketide synthase Agnpks1. The atrochrysone carboxyl ACP thioesterase AgnL7 then breaks the thioester bond and releases the atrochrysone carboxylic acid as the first enzyme-free intermediate. The decarboxylase AgnL1 then catalyzes the concerted decarboxylation-elimination required to convert atochrysone carboxylic acid into emodin anthrone, which is further oxidized to emodin by the anthrone oxygenase AgnL2. Emodin then undergoes reduction catalyzed by the oxidoreductase AgnL4 to yield the dihydroquinone tautomer which is the substrate for reduction by the short chain dehydrogenase AgnL6 reduction to produce hydroxyketone, followed by AgnL8 dehydration and likely spontaneous autoxidation to chrysophanol. Baeyer-Villiger oxidation by the oxidase AgnL3 leads to monodictyphenone via cleavage of the C-10/C-10a bond of chrysophanol. Alternative cleavage at the C-4a/C-10 bond of chrysophanol also leads to the formation some cephalone F. Further conversion to agnestins A and B, requires reduction to dihydro-monodictyphenone, oxidation to agnestin C probably via an epoxide, and rearrangement to either agnestin A or agnestin B directly, although agnestin A or agnestin B can also interconvert. Within the cluster, AgnR1 is the only unassigned oxidoreductase present which could be involved in this conversion. However, AgnR1 seems not to be involved in this step, and thus genes involved in the proposed oxidation/reduction may be located elsewhere on the genome. Further agnestin A derivatives are probably formed by spontaneous decarboxylations, dehydrations and methanolysis reactions. This is Oxidoreductase AgnL4 from Paecilomyces divaricatus (Penicillium divaricatum).